Here is a 213-residue protein sequence, read N- to C-terminus: Ribosomal RNA small subunit methyltransferase G (213 aa).

S-adenosyl-L-methionine is bound by residues glycine 77, phenylalanine 82, 130 to 131, and arginine 146; that span reads IE.

It belongs to the methyltransferase superfamily. RNA methyltransferase RsmG family.

It is found in the cytoplasm. It carries out the reaction guanosine(527) in 16S rRNA + S-adenosyl-L-methionine = N(7)-methylguanosine(527) in 16S rRNA + S-adenosyl-L-homocysteine. In terms of biological role, specifically methylates the N7 position of guanine in position 527 of 16S rRNA. The polypeptide is Ribosomal RNA small subunit methyltransferase G (Bartonella tribocorum (strain CIP 105476 / IBS 506)).